A 195-amino-acid polypeptide reads, in one-letter code: Imidazoleglycerol-phosphate dehydratase (195 aa).

It belongs to the imidazoleglycerol-phosphate dehydratase family.

The protein localises to the cytoplasm. The enzyme catalyses D-erythro-1-(imidazol-4-yl)glycerol 3-phosphate = 3-(imidazol-4-yl)-2-oxopropyl phosphate + H2O. It functions in the pathway amino-acid biosynthesis; L-histidine biosynthesis; L-histidine from 5-phospho-alpha-D-ribose 1-diphosphate: step 6/9. This chain is Imidazoleglycerol-phosphate dehydratase, found in Jannaschia sp. (strain CCS1).